A 445-amino-acid chain; its full sequence is Histamine H3 receptor (445 aa).

At 1–39 (MERAPPDGLMNASGALAGEAAAAGGARGFSAAWTAVLAA) the chain is on the extracellular side. The N-linked (GlcNAc...) asparagine glycan is linked to N11. Residues 40–60 (LMALLIVATVLGNALVMLAFV) traverse the membrane as a helical segment. The Cytoplasmic segment spans residues 61–70 (ADSSLRTQNN). Residues 71 to 91 (FFLLNLAISDFLVGAFCIPLY) traverse the membrane as a helical segment. At 92 to 108 (VPYVLTGRWTFGRGLCK) the chain is on the extracellular side. Cysteines 107 and 188 form a disulfide. Residues 109–129 (LWLVVDYLLCASSVFNIVLIS) form a helical membrane-spanning segment. Residues 130-156 (YDRFLSVTRAVSYRAQQGDTRRAVRKM) lie on the Cytoplasmic side of the membrane. A helical membrane pass occupies residues 157 to 177 (ALVWVLAFLLYGPAILSWEYL). The Extracellular segment spans residues 178-196 (SGGSSIPEGHCYAEFFYNW). A helical transmembrane segment spans residues 197-217 (YFLITASTLEFFTPFLSVTFF). Over 218 to 359 (NLSIYLNIQR…LSRDKKVAKS (142 aa)) the chain is Cytoplasmic. 2 disordered regions span residues 234–259 (DGGREAGPEPPPDAQPSPPPAPPSCW) and 273–336 (HRYG…LEKR). Pro residues predominate over residues 241-256 (PEPPPDAQPSPPPAPP). Gly residues predominate over residues 289–299 (AGLGGGSGGGA). The span at 300-312 (AASPTSSSGSSSR) shows a compositional bias: low complexity. The helical transmembrane segment at 360–380 (LAIIVSIFGLCWAPYTLLMII) threads the bilayer. The Extracellular portion of the chain corresponds to 381–396 (RAACHGHCVPDYWYET). The helical transmembrane segment at 397 to 417 (SFWLLWANSAVNPVLYPLCHY) threads the bilayer. The Cytoplasmic portion of the chain corresponds to 418-445 (SFRRAFTKLLCPQKLKVQPHGSLEQCWK). S439 bears the Phosphoserine mark.

This sequence belongs to the G-protein coupled receptor 1 family.

The protein localises to the cell membrane. Its function is as follows. The H3 subclass of histamine receptors could mediate the histamine signals in CNS and peripheral nervous system. Signals through the inhibition of adenylate cyclase and displays high constitutive activity (spontaneous activity in the absence of agonist). This chain is Histamine H3 receptor (Hrh3), found in Mus musculus (Mouse).